Consider the following 322-residue polypeptide: HPr kinase/phosphorylase (322 aa).

Catalysis depends on residues H146 and K167. 161–168 is an ATP binding site; sequence GDSGLGKS. S168 is a binding site for Mg(2+). Catalysis depends on D185, which acts as the Proton acceptor; for phosphorylation activity. Proton donor; for dephosphorylation activity. The important for the catalytic mechanism of both phosphorylation and dephosphorylation stretch occupies residues 209–218; it reads LEVRGLGLLD. E210 is a binding site for Mg(2+). R250 is a catalytic residue. Residues 271-276 are important for the catalytic mechanism of dephosphorylation; sequence QVAAGR.

Belongs to the HPrK/P family. In terms of assembly, homohexamer. The cofactor is Mg(2+).

It catalyses the reaction [HPr protein]-L-serine + ATP = [HPr protein]-O-phospho-L-serine + ADP + H(+). The enzyme catalyses [HPr protein]-O-phospho-L-serine + phosphate + H(+) = [HPr protein]-L-serine + diphosphate. Functionally, catalyzes the ATP- as well as the pyrophosphate-dependent phosphorylation of a specific serine residue in HPr, a phosphocarrier protein of the phosphoenolpyruvate-dependent sugar phosphotransferase system (PTS). HprK/P also catalyzes the pyrophosphate-producing, inorganic phosphate-dependent dephosphorylation (phosphorolysis) of seryl-phosphorylated HPr (P-Ser-HPr). In Burkholderia ambifaria (strain ATCC BAA-244 / DSM 16087 / CCUG 44356 / LMG 19182 / AMMD) (Burkholderia cepacia (strain AMMD)), this protein is HPr kinase/phosphorylase.